Reading from the N-terminus, the 176-residue chain is Urease accessory protein UreE (176 aa).

The disordered stretch occupies residues 147–176 (AGAYQQGGGHSHGHAHSHSHEKPHSHTHNH).

The protein belongs to the UreE family.

The protein resides in the cytoplasm. In terms of biological role, involved in urease metallocenter assembly. Binds nickel. Probably functions as a nickel donor during metallocenter assembly. This chain is Urease accessory protein UreE, found in Alcanivorax borkumensis (strain ATCC 700651 / DSM 11573 / NCIMB 13689 / SK2).